The sequence spans 129 residues: uncharacterized protein (129 aa).

Transmembrane regions (helical) follow at residues 15 to 35 (IFII…IFVF), 48 to 68 (IFSF…YYFF), and 107 to 127 (INIF…NLVC).

The protein localises to the membrane. This is an uncharacterized protein from Saccharomyces cerevisiae (strain ATCC 204508 / S288c) (Baker's yeast).